We begin with the raw amino-acid sequence, 161 residues long: FAD synthase (161 aa).

Residues Thr19 to Phe20, His24 to His27, Asp106, and Tyr133 contribute to the ATP site.

It belongs to the archaeal FAD synthase family. As to quaternary structure, homodimer. A divalent metal cation is required as a cofactor.

It carries out the reaction FMN + ATP + H(+) = FAD + diphosphate. Its pathway is cofactor biosynthesis; FAD biosynthesis; FAD from FMN: step 1/1. Catalyzes the transfer of the AMP portion of ATP to flavin mononucleotide (FMN) to produce flavin adenine dinucleotide (FAD) coenzyme. This Methanothermobacter marburgensis (strain ATCC BAA-927 / DSM 2133 / JCM 14651 / NBRC 100331 / OCM 82 / Marburg) (Methanobacterium thermoautotrophicum) protein is FAD synthase.